A 623-amino-acid polypeptide reads, in one-letter code: Oviduct-specific glycoprotein (623 aa).

The first 21 residues, 1–21 (MWKLLLWVGLVLVLKHHDGAA), serve as a signal peptide directing secretion. The GH18 domain maps to 22-385 (HKLVCYFTNW…YVMNDILVRA (364 aa)). Cysteines 26 and 51 form a disulfide. Residues 71–72 (LQ), 98–101 (GGWN), Tyr-142, 211–214 (LSYD), and Trp-355 each bind chitin. 2 N-linked (GlcNAc...) asparagine glycosylation sites follow: Asn-402 and Asn-441. 2 disordered regions span residues 539 to 558 (LTPV…VSPG) and 594 to 623 (RKIS…PQDG). Residues 613-623 (TSETGTHPQDG) are compositionally biased toward polar residues.

This sequence belongs to the glycosyl hydrolase 18 family. Oviduct.

The protein resides in the cytoplasmic vesicle. It localises to the secretory vesicle. Binds to oocyte zona pellucida in vivo. May play a role in the fertilization process and/or early embryonic development. This Papio anubis (Olive baboon) protein is Oviduct-specific glycoprotein (OVGP1).